A 465-amino-acid chain; its full sequence is Phosphomannomutase/phosphoglucomutase (465 aa).

The active-site Phosphoserine intermediate is Ser110. Mg(2+) is bound by residues Ser110, Asp244, Asp246, and Asp248. Substrate-binding residues include Glu327, Ser329, and His331.

Belongs to the phosphohexose mutase family. Monomer. Requires Mg(2+) as cofactor.

The enzyme catalyses alpha-D-mannose 1-phosphate = D-mannose 6-phosphate. The catalysed reaction is alpha-D-glucose 1-phosphate = alpha-D-glucose 6-phosphate. Its pathway is nucleotide-sugar biosynthesis; GDP-alpha-D-mannose biosynthesis; alpha-D-mannose 1-phosphate from D-fructose 6-phosphate: step 2/2. The protein operates within bacterial outer membrane biogenesis; lipopolysaccharide biosynthesis. The phosphomannomutase activity produces a precursor for alginate polymerization. The alginate layer causes a mucoid phenotype and provides a protective barrier against host immune defenses and antibiotics. Also involved in core-LPS biosynthesis due to its phosphoglucomutase activity. Essential for biofilm production. In Pseudomonas syringae pv. tomato (strain ATCC BAA-871 / DC3000), this protein is Phosphomannomutase/phosphoglucomutase (algC).